A 292-amino-acid polypeptide reads, in one-letter code: Aquaporin-3 (292 aa).

The Cytoplasmic segment spans residues 1–24 (MGRQKELVSRCGEMLHIRYRLLRQ). Residues 25–42 (ALAECLGTLILVMFGCGS) traverse the membrane as a helical segment. Over 43–56 (VAQVVLSRGTHGGF) the chain is Extracellular. The helical transmembrane segment at 57 to 74 (LTINLAFGFAVTLGILIA) threads the bilayer. Topologically, residues 75–78 (GQVS) are cytoplasmic. Positions 79 to 92 (GAHLNPAVTFAMCF) form an intramembrane region, discontinuously helical. Residues 83–85 (NPA) carry the NPA 1 motif. Over 93-100 (LAREPWIK) the chain is Cytoplasmic. The chain crosses the membrane as a helical span at residues 101-121 (LPIYTLAQTLGAFLGAGIVFG). Over 122 to 159 (LYYDAIWHFADNQLFVSGPNGTAGIFATYPSGHLDMIN) the chain is Extracellular. N141 carries N-linked (GlcNAc...) asparagine glycosylation. A helical transmembrane segment spans residues 160–177 (GFFDQFIGTASLIVCVLA). At 178–189 (IVDPYNNPVPRG) the chain is on the cytoplasmic side. A helical transmembrane segment spans residues 190-206 (LEAFTVGLVVLVIGTSM). Residues 207-210 (GFNS) are Extracellular-facing. Residues 211 to 224 (GYAVNPARDFGPRL) constitute an intramembrane region (discontinuously helical). The NPA 2 motif lies at 215–217 (NPA). The Extracellular portion of the chain corresponds to 225–242 (FTALAGWGSAVFTTGQHW). Residues 243-264 (WWVPIVSPLLGSIAGVFVYQLM) traverse the membrane as a helical segment. At 265-292 (IGCHLEQPPPSNEEENVKLAHVKHKEQI) the chain is on the cytoplasmic side.

It belongs to the MIP/aquaporin (TC 1.A.8) family. As to quaternary structure, homotetramer; each monomer provides an independent glycerol/water pore. Could also exist in other oligomeric states. As to expression, widely expressed in epithelial cells of kidney (collecting ducts) and airways, in keratinocytes, immature dendritic cells and erythrocytes. Isoform 2 is not detectable in erythrocytes at the protein level.

The protein localises to the cell membrane. Its subcellular location is the basolateral cell membrane. The catalysed reaction is glycerol(in) = glycerol(out). The enzyme catalyses H2O(in) = H2O(out). It catalyses the reaction H2O2(out) = H2O2(in). It carries out the reaction urea(in) = urea(out). Glycerol transport is regulated by pH, with the porin being permeable to glycerol at pH 7.4 but not at pH 5.5. Water permeability, however, is not influenced by pH. Its function is as follows. Aquaglyceroporins form homotetrameric transmembrane channels, with each monomer independently mediating glycerol and water transport across the plasma membrane along their osmotic gradient. Could also be permeable to urea. Also participates in cell permeability to H2O2 and H2O2-mediated signaling. In skin, transports glycerol to the epidermis and stratum corneum, where it maintains hydration, elasticity, and supports lipid biosynthesis for barrier repair. In kidney, contributes to the reabsorption of water, helping the body maintain proper fluid balance. In Homo sapiens (Human), this protein is Aquaporin-3.